A 259-amino-acid chain; its full sequence is Eukaryotic translation initiation factor 3 subunit G-2 (259 aa).

The region spanning 179–257 (SAVRISNLSE…LILSVEWSKP (79 aa)) is the RRM domain.

It belongs to the eIF-3 subunit G family. As to quaternary structure, component of the eukaryotic translation initiation factor 3 (eIF-3) complex. The eIF-3 complex interacts with pix.

The protein resides in the cytoplasm. RNA-binding component of the eukaryotic translation initiation factor 3 (eIF-3) complex, which is involved in protein synthesis of a specialized repertoire of mRNAs and, together with other initiation factors, stimulates binding of mRNA and methionyl-tRNAi to the 40S ribosome. The eIF-3 complex specifically targets and initiates translation of a subset of mRNAs involved in cell proliferation. This subunit can bind 18S rRNA. This is Eukaryotic translation initiation factor 3 subunit G-2 from Drosophila mojavensis (Fruit fly).